A 1029-amino-acid chain; its full sequence is uncharacterized protein (1029 aa).

Positions 1–23 are enriched in basic and acidic residues; it reads MREWCMLRESRTNTPRRAAERGK. The segment at 1–31 is disordered; sequence MREWCMLRESRTNTPRRAAERGKRPGGSSVR. In terms of domain architecture, Guanylate cyclase spans 39-168; the sequence is TALCYDLVGS…AALAMAARLQ (130 aa). 261–268 is an ATP binding site; that stretch reads GDAGIGKS.

This is an uncharacterized protein from Rhizobium meliloti (strain 1021) (Ensifer meliloti).